The primary structure comprises 347 residues: Spermidine/putrescine import ATP-binding protein PotA (347 aa).

The 231-residue stretch at 6 to 236 folds into the ABC transporter domain; that stretch reads IEIKNVYKEF…PKNAFVAKFI (231 aa). 38-45 is an ATP binding site; that stretch reads GPSGCGKT.

This sequence belongs to the ABC transporter superfamily. Spermidine/putrescine importer (TC 3.A.1.11.1) family. The complex is composed of two ATP-binding proteins (PotA), two transmembrane proteins (PotB and PotC) and a solute-binding protein (PotD).

Its subcellular location is the cell membrane. The catalysed reaction is ATP + H2O + polyamine-[polyamine-binding protein]Side 1 = ADP + phosphate + polyamineSide 2 + [polyamine-binding protein]Side 1.. Its function is as follows. Part of the ABC transporter complex PotABCD involved in spermidine/putrescine import. Responsible for energy coupling to the transport system. This chain is Spermidine/putrescine import ATP-binding protein PotA, found in Clostridium novyi (strain NT).